We begin with the raw amino-acid sequence, 1355 residues long: Probable aldehyde oxidase 2 (1355 aa).

Residues 9–96 (RPVVVTVNGE…HCAVTTSEGI (88 aa)) enclose the 2Fe-2S ferredoxin-type domain. Positions 48, 53, 56, and 78 each coordinate [2Fe-2S] cluster. Residues 244–422 (VAVTGDGWFH…VSISIPDWGS (179 aa)) form the FAD-binding PCMH-type domain. A disordered region spans residues 544–577 (PENANVPNGSCTNGTANGSANSSPEKHSNVDSSD). Positions 548–566 (NVPNGSCTNGTANGSANSS) are enriched in polar residues.

It belongs to the xanthine dehydrogenase family. In terms of assembly, aldehyde oxidases (AO) are homodimers and heterodimers of AO subunits. Requires [2Fe-2S] cluster as cofactor. FAD is required as a cofactor. Mo-molybdopterin serves as cofactor.

It catalyses the reaction an aldehyde + O2 + H2O = a carboxylate + H2O2 + H(+). In Oryza sativa subsp. japonica (Rice), this protein is Probable aldehyde oxidase 2.